Consider the following 444-residue polypeptide: Phosphoglucosamine mutase (444 aa).

Serine 101 acts as the Phosphoserine intermediate in catalysis. 4 residues coordinate Mg(2+): serine 101, aspartate 239, aspartate 241, and aspartate 243. At serine 101 the chain carries Phosphoserine.

The protein belongs to the phosphohexose mutase family. It depends on Mg(2+) as a cofactor. In terms of processing, activated by phosphorylation.

It catalyses the reaction alpha-D-glucosamine 1-phosphate = D-glucosamine 6-phosphate. In terms of biological role, catalyzes the conversion of glucosamine-6-phosphate to glucosamine-1-phosphate. The polypeptide is Phosphoglucosamine mutase (Alcanivorax borkumensis (strain ATCC 700651 / DSM 11573 / NCIMB 13689 / SK2)).